Reading from the N-terminus, the 2471-residue chain is Probable polyketide synthase 24 (2471 aa).

The 429-residue stretch at Glu21–Gln449 folds into the Ketosynthase family 3 (KS3) domain. Residues Cys190, His332, and His372 each act as for beta-ketoacyl synthase activity in the active site. Residues Gly654 to Tyr687 are acyl/malonyl transferase. Catalysis depends on Ser664, which acts as the For acyl/malonyl transferase activity. The N-terminal hotdog fold stretch occupies residues Ile953–Asn1075. The PKS/mFAS DH domain maps to Ile953 to Pro1245. Catalysis depends on His987, which acts as the Proton acceptor; for dehydratase activity. A C-terminal hotdog fold region spans residues Asn1094–Pro1245. Catalysis depends on Asp1157, which acts as the Proton donor; for dehydratase activity. Positions Ile1426–Asn1469 form a coiled coil. The 78-residue stretch at Ser2336–Leu2413 folds into the Carrier domain. An O-(pantetheine 4'-phosphoryl)serine modification is found at Ser2373.

It depends on pantetheine 4'-phosphate as a cofactor.

Functionally, probable polyketide synthase. In Dictyostelium discoideum (Social amoeba), this protein is Probable polyketide synthase 24 (pks24).